The chain runs to 429 residues: UDP-N-acetylglucosamine 1-carboxyvinyltransferase (429 aa).

Residue 22–23 (KN) coordinates phosphoenolpyruvate. Arginine 102 provides a ligand contact to UDP-N-acetyl-alpha-D-glucosamine. Residue cysteine 126 is the Proton donor of the active site. Cysteine 126 bears the 2-(S-cysteinyl)pyruvic acid O-phosphothioketal mark. Residues 131–135 (RPVDL), 171–174 (KVSV), aspartate 316, and isoleucine 338 contribute to the UDP-N-acetyl-alpha-D-glucosamine site.

The protein belongs to the EPSP synthase family. MurA subfamily.

It localises to the cytoplasm. It carries out the reaction phosphoenolpyruvate + UDP-N-acetyl-alpha-D-glucosamine = UDP-N-acetyl-3-O-(1-carboxyvinyl)-alpha-D-glucosamine + phosphate. Its pathway is cell wall biogenesis; peptidoglycan biosynthesis. Cell wall formation. Adds enolpyruvyl to UDP-N-acetylglucosamine. This Chelativorans sp. (strain BNC1) protein is UDP-N-acetylglucosamine 1-carboxyvinyltransferase.